We begin with the raw amino-acid sequence, 88 residues long: Sec-independent protein translocase protein TatA (88 aa).

A helical membrane pass occupies residues 1 to 21 (MGGIGIWQLAIITVIVILLFG). Residues 46 to 88 (DNDKDSTQVDDKDSTQVDDNAKQPSNKKVEENIKEQSKEKDRA) are disordered.

This sequence belongs to the TatA/E family. The Tat system comprises two distinct complexes: a TatABC complex, containing multiple copies of TatA, TatB and TatC subunits, and a separate TatA complex, containing only TatA subunits. Substrates initially bind to the TatABC complex, which probably triggers association of the separate TatA complex to form the active translocon.

Its subcellular location is the cell inner membrane. Part of the twin-arginine translocation (Tat) system that transports large folded proteins containing a characteristic twin-arginine motif in their signal peptide across membranes. TatA could form the protein-conducting channel of the Tat system. The polypeptide is Sec-independent protein translocase protein TatA (Psychromonas ingrahamii (strain DSM 17664 / CCUG 51855 / 37)).